The primary structure comprises 706 residues: Polyribonucleotide nucleotidyltransferase (706 aa).

Positions 486 and 492 each coordinate Mg(2+). One can recognise a KH domain in the interval 553 to 612 (PRIHTIKISTDKIKDVIGKGGSVIRALTEETGTTIEIEDDGTVRIASTDGEKAKHAIRRI). In terms of domain architecture, S1 motif spans 622–690 (GRVYQGKVTR…RQGRVRLSIK (69 aa)).

Belongs to the polyribonucleotide nucleotidyltransferase family. As to quaternary structure, component of the RNA degradosome, which is a multiprotein complex involved in RNA processing and mRNA degradation. It depends on Mg(2+) as a cofactor.

Its subcellular location is the cytoplasm. The catalysed reaction is RNA(n+1) + phosphate = RNA(n) + a ribonucleoside 5'-diphosphate. In terms of biological role, involved in mRNA degradation. Catalyzes the phosphorolysis of single-stranded polyribonucleotides processively in the 3'- to 5'-direction. This chain is Polyribonucleotide nucleotidyltransferase, found in Pectobacterium atrosepticum (strain SCRI 1043 / ATCC BAA-672) (Erwinia carotovora subsp. atroseptica).